Reading from the N-terminus, the 125-residue chain is UPF0102 protein Mpop_0474 (125 aa).

It belongs to the UPF0102 family.

The chain is UPF0102 protein Mpop_0474 from Methylorubrum populi (strain ATCC BAA-705 / NCIMB 13946 / BJ001) (Methylobacterium populi).